A 269-amino-acid chain; its full sequence is 3-methyl-2-oxobutanoate hydroxymethyltransferase (269 aa).

Mg(2+) is bound by residues D50 and D89. 3-methyl-2-oxobutanoate contacts are provided by residues D50–S51, D89, and K118. E120 is a Mg(2+) binding site. E187 acts as the Proton acceptor in catalysis.

The protein belongs to the PanB family. As to quaternary structure, homodecamer; pentamer of dimers. Mg(2+) is required as a cofactor.

The protein localises to the cytoplasm. The catalysed reaction is 3-methyl-2-oxobutanoate + (6R)-5,10-methylene-5,6,7,8-tetrahydrofolate + H2O = 2-dehydropantoate + (6S)-5,6,7,8-tetrahydrofolate. It functions in the pathway cofactor biosynthesis; (R)-pantothenate biosynthesis; (R)-pantoate from 3-methyl-2-oxobutanoate: step 1/2. Catalyzes the reversible reaction in which hydroxymethyl group from 5,10-methylenetetrahydrofolate is transferred onto alpha-ketoisovalerate to form ketopantoate. This Aliarcobacter butzleri (strain RM4018) (Arcobacter butzleri) protein is 3-methyl-2-oxobutanoate hydroxymethyltransferase.